A 561-amino-acid polypeptide reads, in one-letter code: Sensor histidine kinase BtsS (561 aa).

Over 1–3 the chain is Cytoplasmic; the sequence is MYD. Residues 4–24 traverse the membrane as a helical segment; it reads FNLVLLLLQQMCVFLVIAWLM. Residues 25–43 are Periplasmic-facing; the sequence is SKTPLFIPLMQVTVRLPHK. Residues 44 to 64 form a helical membrane-spanning segment; sequence FLCYIVFSIFCIMGTWFGLHI. Topologically, residues 65 to 72 are cytoplasmic; that stretch reads DDSIANTR. A helical membrane pass occupies residues 73–93; it reads AIGAVMGGLLGGPVVGGLVGL. Residues 94-108 lie on the Periplasmic side of the membrane; the sequence is TGGLHRYSMGGMTAL. Residues 109–129 traverse the membrane as a helical segment; it reads SCMISTIVEGLLGGLVHSILI. Residues 130–140 are Cytoplasmic-facing; that stretch reads RRGRTDKVFNP. A helical membrane pass occupies residues 141–161; that stretch reads ITAGAVTFVAEMVQMLIILAI. The Periplasmic segment spans residues 162 to 170; the sequence is ARPYEDAVR. The helical transmembrane segment at 171–191 threads the bilayer; sequence LVSNIAAPMMVTNTVGAALFM. At 192 to 561 the chain is on the cytoplasmic side; that stretch reads RILLDKRAMF…TLRLPWRDEA (370 aa). Residues 354 to 559 enclose the Histidine kinase domain; the sequence is QILAGQYERQ…RITLRLPWRD (206 aa).

Post-translationally, autophosphorylated.

The protein resides in the cell inner membrane. The catalysed reaction is ATP + protein L-histidine = ADP + protein N-phospho-L-histidine.. Its function is as follows. Member of the two-component regulatory system BtsS/BtsR. BtsS is a high-affinity receptor for extracellular pyruvate that activates BtsR by phosphorylation. The protein is Sensor histidine kinase BtsS of Escherichia coli O6:H1 (strain CFT073 / ATCC 700928 / UPEC).